We begin with the raw amino-acid sequence, 197 residues long: ATP-dependent Clp protease proteolytic subunit 1 (197 aa).

Ser-99 serves as the catalytic Nucleophile. His-124 is an active-site residue.

Belongs to the peptidase S14 family. In terms of assembly, fourteen ClpP subunits assemble into 2 heptameric rings which stack back to back to give a disk-like structure with a central cavity, resembling the structure of eukaryotic proteasomes.

The protein localises to the cytoplasm. It carries out the reaction Hydrolysis of proteins to small peptides in the presence of ATP and magnesium. alpha-casein is the usual test substrate. In the absence of ATP, only oligopeptides shorter than five residues are hydrolyzed (such as succinyl-Leu-Tyr-|-NHMec, and Leu-Tyr-Leu-|-Tyr-Trp, in which cleavage of the -Tyr-|-Leu- and -Tyr-|-Trp bonds also occurs).. Cleaves peptides in various proteins in a process that requires ATP hydrolysis. Has a chymotrypsin-like activity. Plays a major role in the degradation of misfolded proteins. The chain is ATP-dependent Clp protease proteolytic subunit 1 from Treponema denticola (strain ATCC 35405 / DSM 14222 / CIP 103919 / JCM 8153 / KCTC 15104).